Here is a 619-residue protein sequence, read N- to C-terminus: Dihydroxy-acid dehydratase (619 aa).

A Mg(2+)-binding site is contributed by D81. [2Fe-2S] cluster is bound at residue C122. 2 residues coordinate Mg(2+): D123 and K124. An N6-carboxylysine modification is found at K124. C195 contributes to the [2Fe-2S] cluster binding site. E491 contacts Mg(2+). The Proton acceptor role is filled by S517.

Belongs to the IlvD/Edd family. As to quaternary structure, homodimer. Requires [2Fe-2S] cluster as cofactor. The cofactor is Mg(2+).

The catalysed reaction is (2R)-2,3-dihydroxy-3-methylbutanoate = 3-methyl-2-oxobutanoate + H2O. It catalyses the reaction (2R,3R)-2,3-dihydroxy-3-methylpentanoate = (S)-3-methyl-2-oxopentanoate + H2O. The protein operates within amino-acid biosynthesis; L-isoleucine biosynthesis; L-isoleucine from 2-oxobutanoate: step 3/4. It functions in the pathway amino-acid biosynthesis; L-valine biosynthesis; L-valine from pyruvate: step 3/4. Functionally, functions in the biosynthesis of branched-chain amino acids. Catalyzes the dehydration of (2R,3R)-2,3-dihydroxy-3-methylpentanoate (2,3-dihydroxy-3-methylvalerate) into 2-oxo-3-methylpentanoate (2-oxo-3-methylvalerate) and of (2R)-2,3-dihydroxy-3-methylbutanoate (2,3-dihydroxyisovalerate) into 2-oxo-3-methylbutanoate (2-oxoisovalerate), the penultimate precursor to L-isoleucine and L-valine, respectively. The chain is Dihydroxy-acid dehydratase from Sphingopyxis alaskensis (strain DSM 13593 / LMG 18877 / RB2256) (Sphingomonas alaskensis).